The following is a 548-amino-acid chain: Probable malate:quinone oxidoreductase (548 aa).

Residues 521-548 (DKPQAADSTPKPQLKPQPVQKEVADIAL) form a disordered region. Low complexity predominate over residues 530 to 541 (PKPQLKPQPVQK).

The protein belongs to the MQO family. FAD is required as a cofactor.

It catalyses the reaction (S)-malate + a quinone = a quinol + oxaloacetate. It functions in the pathway carbohydrate metabolism; tricarboxylic acid cycle; oxaloacetate from (S)-malate (quinone route): step 1/1. This Escherichia coli (strain UTI89 / UPEC) protein is Probable malate:quinone oxidoreductase.